Here is a 213-residue protein sequence, read N- to C-terminus: MLGGGAPRARHVLPNIVERTSRGEYSMDPYSKLLKERIVFLGVQIDDVSANDVMAQLLFLESEDPDRDISIYINSPGGSFTSLTAIYDTMQFVRPDISTICMGQAASAAAVLLAAGTPGKRFALENSRILIHQPSAQGEGQSSDIEIQAREILRVRALQETMLARHTGRTETEIRRDTERDKIFSADEAEEYGLIDEVIMSRKAARLLSARSA.

The active-site Nucleophile is S107. Residue H132 is part of the active site.

It belongs to the peptidase S14 family. In terms of assembly, fourteen ClpP subunits assemble into 2 heptameric rings which stack back to back to give a disk-like structure with a central cavity, resembling the structure of eukaryotic proteasomes.

It localises to the cytoplasm. It catalyses the reaction Hydrolysis of proteins to small peptides in the presence of ATP and magnesium. alpha-casein is the usual test substrate. In the absence of ATP, only oligopeptides shorter than five residues are hydrolyzed (such as succinyl-Leu-Tyr-|-NHMec, and Leu-Tyr-Leu-|-Tyr-Trp, in which cleavage of the -Tyr-|-Leu- and -Tyr-|-Trp bonds also occurs).. Its function is as follows. Cleaves peptides in various proteins in a process that requires ATP hydrolysis. Has a chymotrypsin-like activity. Plays a major role in the degradation of misfolded proteins. In Frankia casuarinae (strain DSM 45818 / CECT 9043 / HFP020203 / CcI3), this protein is ATP-dependent Clp protease proteolytic subunit 3.